The sequence spans 208 residues: LysM and putative peptidoglycan-binding domain-containing protein 2 (208 aa).

The tract at residues 1–54 is disordered; the sequence is MAEFSPVLPPLRDDGGGGRYGQPLFPRSRSGSESDSELSQSLARTKTRSYGSTA. Positions 27 to 42 are enriched in low complexity; it reads RSRSGSESDSELSQSL. The LysM domain maps to 65-109; that stretch reads IEHRVTDGETLQGIALKYGVTMEQIKRVNKLFSNDCIFLRNTLSI. 2 disordered regions span residues 122–169 and 187–208; these read LSLE…EELS and AARKLKEDGGREEDDTNSYQEI. Residues 129-140 show a composition bias toward polar residues; the sequence is SEGNTPQESPCV. Residues 147–156 are compositionally biased toward pro residues; the sequence is PSPPPEPSVP.

This chain is LysM and putative peptidoglycan-binding domain-containing protein 2 (lysmd2), found in Danio rerio (Zebrafish).